A 357-amino-acid polypeptide reads, in one-letter code: Uroporphyrinogen decarboxylase (357 aa).

Substrate contacts are provided by residues 27–31, D77, Y154, S209, and H330; that span reads RQAGR.

It belongs to the uroporphyrinogen decarboxylase family. As to quaternary structure, homodimer.

It localises to the cytoplasm. It carries out the reaction uroporphyrinogen III + 4 H(+) = coproporphyrinogen III + 4 CO2. The protein operates within porphyrin-containing compound metabolism; protoporphyrin-IX biosynthesis; coproporphyrinogen-III from 5-aminolevulinate: step 4/4. Functionally, catalyzes the decarboxylation of four acetate groups of uroporphyrinogen-III to yield coproporphyrinogen-III. The polypeptide is Uroporphyrinogen decarboxylase (Acinetobacter baumannii (strain SDF)).